The primary structure comprises 93 residues: Aspartyl/glutamyl-tRNA(Asn/Gln) amidotransferase subunit C (93 aa).

It belongs to the GatC family. As to quaternary structure, heterotrimer of A, B and C subunits.

It catalyses the reaction L-glutamyl-tRNA(Gln) + L-glutamine + ATP + H2O = L-glutaminyl-tRNA(Gln) + L-glutamate + ADP + phosphate + H(+). The catalysed reaction is L-aspartyl-tRNA(Asn) + L-glutamine + ATP + H2O = L-asparaginyl-tRNA(Asn) + L-glutamate + ADP + phosphate + 2 H(+). Its function is as follows. Allows the formation of correctly charged Asn-tRNA(Asn) or Gln-tRNA(Gln) through the transamidation of misacylated Asp-tRNA(Asn) or Glu-tRNA(Gln) in organisms which lack either or both of asparaginyl-tRNA or glutaminyl-tRNA synthetases. The reaction takes place in the presence of glutamine and ATP through an activated phospho-Asp-tRNA(Asn) or phospho-Glu-tRNA(Gln). This chain is Aspartyl/glutamyl-tRNA(Asn/Gln) amidotransferase subunit C, found in Rubrobacter xylanophilus (strain DSM 9941 / JCM 11954 / NBRC 16129 / PRD-1).